We begin with the raw amino-acid sequence, 292 residues long: Elongation factor Ts (292 aa).

The segment at 81–84 (TDFV) is involved in Mg(2+) ion dislocation from EF-Tu.

The protein belongs to the EF-Ts family.

It localises to the cytoplasm. Associates with the EF-Tu.GDP complex and induces the exchange of GDP to GTP. It remains bound to the aminoacyl-tRNA.EF-Tu.GTP complex up to the GTP hydrolysis stage on the ribosome. The chain is Elongation factor Ts from Alkalilimnicola ehrlichii (strain ATCC BAA-1101 / DSM 17681 / MLHE-1).